The primary structure comprises 372 residues: Molybdopterin synthase catalytic subunit (372 aa).

Substrate contacts are provided by residues 101-102 (HR), Lys-117, and 124-126 (KKE).

Belongs to the MoaE family. MOCS2B subfamily. Heterotetramer; composed of 2 small (Mocs2A) and 2 large (Mocs2B) subunits.

It is found in the cytoplasm. The catalysed reaction is 2 [molybdopterin-synthase sulfur-carrier protein]-C-terminal-Gly-aminoethanethioate + cyclic pyranopterin phosphate + H2O = molybdopterin + 2 [molybdopterin-synthase sulfur-carrier protein]-C-terminal Gly-Gly + 2 H(+). Its pathway is cofactor biosynthesis; molybdopterin biosynthesis. Functionally, catalytic subunit of the molybdopterin synthase complex, a complex that catalyzes the conversion of precursor Z into molybdopterin. Acts by mediating the incorporation of 2 sulfur atoms from thiocarboxylated Mocs2A into precursor Z to generate a dithiolene group. The polypeptide is Molybdopterin synthase catalytic subunit (Drosophila willistoni (Fruit fly)).